Consider the following 156-residue polypeptide: Putative pre-16S rRNA nuclease (156 aa).

The protein belongs to the YqgF nuclease family.

Its subcellular location is the cytoplasm. In terms of biological role, could be a nuclease involved in processing of the 5'-end of pre-16S rRNA. The chain is Putative pre-16S rRNA nuclease from Aromatoleum aromaticum (strain DSM 19018 / LMG 30748 / EbN1) (Azoarcus sp. (strain EbN1)).